Reading from the N-terminus, the 88-residue chain is UPF0147 protein Ta0600 (88 aa).

The protein belongs to the UPF0147 family.

The protein is UPF0147 protein Ta0600 of Thermoplasma acidophilum (strain ATCC 25905 / DSM 1728 / JCM 9062 / NBRC 15155 / AMRC-C165).